We begin with the raw amino-acid sequence, 224 residues long: Ribonuclease HII (224 aa).

The region spanning Arg-21–Gln-223 is the RNase H type-2 domain. Residues Asp-27, Glu-28, and Asp-124 each coordinate a divalent metal cation.

This sequence belongs to the RNase HII family. The cofactor is Mn(2+). Mg(2+) is required as a cofactor.

Its subcellular location is the cytoplasm. The catalysed reaction is Endonucleolytic cleavage to 5'-phosphomonoester.. Endonuclease that specifically degrades the RNA of RNA-DNA hybrids. The polypeptide is Ribonuclease HII (Roseiflexus castenholzii (strain DSM 13941 / HLO8)).